The following is a 673-amino-acid chain: MGHVAPHASKKEHVAPHAAEKDHVAPHASKKEHVAPHAAEKGQVAPYAAGEGQVAPNAAGERPVAPYAAGEGQVAPYAAGEGQVAPYAAGEGQVAPYAAGEGQVAPYAAGEAQVAPHAAGEGRVAPHAAGDGQVEHCTVEDREEGHIGTTEQGHMSHYTSKLEHMAPPSAQTEAVVSYVAGERHAPPDCTVSGPAMCCSAEARQTTPDWTTTGPEISQGTLPGLTVLHVGGTWQTFAAEDEPCVTTLLSPVKPLSSSRKYAPYNLQIPSYSESEPQAHKGLSSETFGPCEPLHINQLPSSLLLKIFSNLSLNERCILASLVCKYWRDLCLDSQFWKQLDLSNRQQIKDNILEEIASRSQNITEINISDCFSVSDQGVCVVALKCPGLVKYTAYRCKQLSDISLIALAAHCPSLQKVHVGNQDKLSDEALIQMGRRCKELKDIHFGQCYKISDEGLIVIAKGCQKLQKIYMQENKLVSDESVKAFAEHCPGLQYVGFMGCSVTSEGVINLTKLKHLSSLDLRHITELDNETVMEIVKQCQHLTSLNLCLNRSINDRCVEVIAKEGRSLKELYLVTCKITDYALIAIGRYSKSIETVDVGWCKEITDYGAKQIAQSSKSIRYLGLMRCDKVNEATVEQLVQQYPHITFSTVLQDCKRTLERAYQMGWTPNASPAT.

Residues 1 to 39 (MGHVAPHASKKEHVAPHAAEKDHVAPHASKKEHVAPHAA) form a disordered region. Residues 9–39 (SKKEHVAPHAAEKDHVAPHASKKEHVAPHAA) show a composition bias toward basic and acidic residues. An F-box domain is found at 291–338 (PLHINQLPSSLLLKIFSNLSLNERCILASLVCKYWRDLCLDSQFWKQL).

The protein belongs to the FBXL17 family. Part of the SCF (SKP1-CUL1-F-box) E3 ubiquitin-protein ligase complex SCF(FBXL17). Interacts with BTB domain-containing proteins; specifically recognizes and binds a conserved degron of non-consecutive residues present at the interface of BTB dimers of aberrant composition. In terms of tissue distribution, expressed in the neuro-ectoderm of embryos.

The protein localises to the cytoplasm. It is found in the nucleus. In terms of biological role, substrate-recognition component of the SCF(FBXL17) E3 ubiquitin ligase complex, a key component of a quality control pathway required to ensure functional dimerization of BTB domain-containing proteins (dimerization quality control, DQC). FBXL17 specifically recognizes and binds a conserved degron of non-consecutive residues present at the interface of BTB dimers of aberrant composition: aberrant BTB dimer are then ubiquitinated by the SCF(FBXL17) complex and degraded by the proteasome. The ability of the SCF(FBXL17) complex to eliminate compromised BTB dimers is required for the differentiation and survival of neural crest and neuronal cells. This chain is F-box/LRR-repeat protein 17, found in Xenopus laevis (African clawed frog).